A 116-amino-acid polypeptide reads, in one-letter code: Large ribosomal subunit protein bL19 (116 aa).

It belongs to the bacterial ribosomal protein bL19 family.

Its function is as follows. This protein is located at the 30S-50S ribosomal subunit interface and may play a role in the structure and function of the aminoacyl-tRNA binding site. The sequence is that of Large ribosomal subunit protein bL19 from Haemophilus ducreyi (strain 35000HP / ATCC 700724).